Consider the following 180-residue polypeptide: Progesterone receptor (180 aa).

The segment at 1–11 adopts an NR C4-type zinc-finger fold; that stretch reads KNCPACRLRKC. Positions 1–16 form a DNA-binding region, nuclear receptor; that stretch reads KNCPACRLRKCCQAGM. Position 60 is a phosphoserine (Ser-60). The NR LBD domain occupies 63–180; it reads QEIQLFPPLI…QRMKESSFYS (118 aa). The segment at 71 to 180 is AF2; mediates transcriptional activation; it reads LINLLLSIEP…QRMKESSFYS (110 aa). Arg-150 lines the progesterone pocket.

Belongs to the nuclear hormone receptor family. NR3 subfamily. As to quaternary structure, interacts with SMARD1 and UNC45A. Interacts with CUEDC2; the interaction promotes ubiquitination, decreases sumoylation, and represses transcriptional activity. Interacts with PIAS3; the interaction promotes sumoylation of PR in a hormone-dependent manner, inhibits DNA-binding, and alters nuclear export. Interacts with SP1; the interaction requires ligand-induced phosphorylation by ERK1/2-MAPK. Interacts with PRMT2. Interacts with NCOA2 and NCOA1. Interacts with KLF9. Interacts with GTF2B. In terms of processing, phosphorylated on multiple serine sites. Several of these sites are hormone-dependent. Sumoylation is hormone-dependent and represses transcriptional activity. Sumoylation on all three sites is enhanced by PIAS3. Desumoylated by SENP1. Sumoylation is repressed by ubiquitination and modulated by phosphorylation. Post-translationally, ubiquitination is hormone-dependent and represses sumoylation. In terms of processing, palmitoylated by ZDHHC7 and ZDHHC21. Palmitoylation is required for plasma membrane targeting and for rapid intracellular signaling via ERK and AKT kinases and cAMP generation.

It is found in the nucleus. The protein resides in the cytoplasm. The steroid hormones and their receptors are involved in the regulation of eukaryotic gene expression and affect cellular proliferation and differentiation in target tissues. Transcriptional activator of several progesteron-dependent promoters in a variety of cell types. Involved in activation of SRC-dependent MAPK signaling on hormone stimulation. This is Progesterone receptor (PGR) from Notamacropus eugenii (Tammar wallaby).